The chain runs to 220 residues: 26S proteasome non-ATPase regulatory subunit 9 (220 aa).

2 coiled-coil regions span residues 4–32 (GTTT…GQIL) and 61–91 (RLAR…YHSE). Residues 102–200 (RASALDLDSD…QLDLILVPKT (99 aa)) form the PDZ domain.

This sequence belongs to the proteasome subunit p27 family. Interacts with PI31; this interaction is increased by PI31 ADP-ribosylation. Interacts with Rpt5.

Acts as a chaperone during the assembly of the 26S proteasome, specifically of the base subcomplex of the PA700/19S regulatory complex (RC). In Drosophila melanogaster (Fruit fly), this protein is 26S proteasome non-ATPase regulatory subunit 9.